The following is a 915-amino-acid chain: Probable serine/threonine-protein kinase dyrk2 (915 aa).

Low complexity-rich tracts occupy residues 51–79, 108–119, 170–185, and 196–218; these read TSNT…PTIS, SSSKSSSNSSSI, SSSS…STTS, and SSNS…SGSS. 3 disordered regions span residues 51–119, 132–334, and 349–533; these read TSNT…SSSI, FSSS…SKSS, and AIKS…PTKS. Residues 234 to 260 show a composition bias toward polar residues; the sequence is PSHTISDSPRSSTMKSRSVSISNGSLF. Low complexity-rich tracts occupy residues 261 to 287, 300 to 333, 352 to 364, 379 to 391, 399 to 425, and 433 to 533; these read SPTN…SSIS, SSST…PSKS, SRSL…LARV, SSSS…SFSS, SSSK…ASKI, and SLSS…PTKS. Residues 605–902 enclose the Protein kinase domain; the sequence is FEIVSILGQG…AEQGLKHDWI (298 aa). ATP-binding positions include 611–619 and lysine 634; that span reads LGQGSFCQV. Catalysis depends on aspartate 731, which acts as the Proton acceptor.

The protein belongs to the protein kinase superfamily. CMGC Ser/Thr protein kinase family. MNB/DYRK subfamily.

It carries out the reaction L-seryl-[protein] + ATP = O-phospho-L-seryl-[protein] + ADP + H(+). The catalysed reaction is L-threonyl-[protein] + ATP = O-phospho-L-threonyl-[protein] + ADP + H(+). The enzyme catalyses L-tyrosyl-[protein] + ATP = O-phospho-L-tyrosyl-[protein] + ADP + H(+). The sequence is that of Probable serine/threonine-protein kinase dyrk2 (dyrk2) from Dictyostelium discoideum (Social amoeba).